Consider the following 467-residue polypeptide: Cobyrinate a,c-diamide synthase (467 aa).

Residues 256–449 (RVGYAADQAF…AHIHVEGAPE (194 aa)) form the GATase cobBQ-type domain. The active-site Nucleophile is Cys-338.

The protein belongs to the CobB/CbiA family. Requires Mg(2+) as cofactor.

The catalysed reaction is cob(II)yrinate + 2 L-glutamine + 2 ATP + 2 H2O = cob(II)yrinate a,c diamide + 2 L-glutamate + 2 ADP + 2 phosphate + 2 H(+). It participates in cofactor biosynthesis; adenosylcobalamin biosynthesis; cob(II)yrinate a,c-diamide from sirohydrochlorin (anaerobic route): step 10/10. Catalyzes the ATP-dependent amidation of the two carboxylate groups at positions a and c of cobyrinate, using either L-glutamine or ammonia as the nitrogen source. In Magnetococcus marinus (strain ATCC BAA-1437 / JCM 17883 / MC-1), this protein is Cobyrinate a,c-diamide synthase.